Reading from the N-terminus, the 488-residue chain is MALTVNTNIASLNTQRNLNASSNDLNTSLQRLTTGYRINSAKDDAAGLQISNRLSNQISGLNVATRNANDGISLAQTAEGALQQSTNILQRIRDLALQSANGSNSDADRAALQKEVAAQQAELTRISDTTTFGGRKLLDGSFGTTSFQVGSNAYETIDISLQNASASAIGSYQVGSNGAGTVASVAGTATASGIASGTVNLVGGGQVKNIAIAAGDSAKAIAEKMDGAIPNLSARARTVFTADVSGVTGGSLNFDVTVGSNTVSLAGVTSTQDLADQLNSNSSKLGITASINDKGVLTITSATGENVKFGAQTGTATAGQVAVKVQGSDGKFEAAAKNVVAAGTAATTTIVTGYVQLNSPTAYSVSGTGTQASQVFGNASAAQKSSVASVDISTADGAQNAIAVVDNALAAIDAQRADLGAVQNRFKNTIDNLTNISENATNARSRIKDTDFAAETAALSKNQVLQQAGTAILAQANQLPQAVLSLLR.

This sequence belongs to the bacterial flagellin family. Phosphorylated on tyrosine residue(s).

The protein localises to the secreted. Its subcellular location is the bacterial flagellum. Its function is as follows. Flagellin is the subunit protein which polymerizes to form the filaments of bacterial flagella. The polypeptide is B-type flagellin (fliC) (Pseudomonas aeruginosa (strain ATCC 15692 / DSM 22644 / CIP 104116 / JCM 14847 / LMG 12228 / 1C / PRS 101 / PAO1)).